The sequence spans 1220 residues: Myosin-2 (1220 aa).

Residues 1–12 are compositionally biased toward polar residues; sequence MMLSASPNTLAK. 2 disordered regions span residues 1-54 and 68-95; these read MMLS…ARRS and QNGS…RKEK. The segment covering 20–33 has biased composition (basic and acidic residues); that stretch reads ESLRQKDECDRPKD. Positions 40–54 are enriched in low complexity; that stretch reads SRPNSRARLPSARRS. The segment covering 82 to 95 has biased composition (basic and acidic residues); the sequence is ESERKEEGVKRKEK. A Myosin N-terminal SH3-like domain is found at 160–209; that stretch reads KKKLRVWCRVSNGQWQLGKIQSTSADTSLVMLSTANVVKVSTEELFPANP. The Myosin motor domain maps to 213–879; sequence EGVEDLIQLS…QIGIFEDRRK (667 aa). ATP contacts are provided by residues 304–311 and 353–361; these read GESGAGKT and NANSSRFGK. Actin-binding stretches follow at residues 638-672 and 759-781; these read LIEK…KQHL and LFKL…KPNS. IQ domains lie at 881 to 910, 904 to 933, and 942 to 971; these read VLQG…VTLV, MRKV…FHAD, and ELSA…QKEL. 2 disordered regions span residues 968–1007 and 1075–1118; these read QKEL…MSDL and SITG…NGNT. 2 stretches are compositionally biased toward polar residues: residues 997–1006 and 1098–1118; these read PQVQPTSMSD and TMST…NGNT. A coiled-coil region spans residues 1003 to 1071; that stretch reads SMSDLQKRIL…MSLAAARKSL (69 aa).

It belongs to the TRAFAC class myosin-kinesin ATPase superfamily. Myosin family. Plant myosin class VIII subfamily. Homodimer. Expressed in flowers, leaves and roots.

The protein localises to the cell junction. The protein resides in the plasmodesma. It localises to the endosome. Myosin heavy chain that is required for the cell cycle-regulated transport of various organelles and proteins for their segregation. Functions by binding with its tail domain to receptor proteins on organelles and exerting force with its N-terminal motor domain against actin filaments, thereby transporting its cargo along polarized actin cables. Involved in endocytosis via its action in endosomal trafficking. In Arabidopsis thaliana (Mouse-ear cress), this protein is Myosin-2 (VIII-2).